A 107-amino-acid polypeptide reads, in one-letter code: Urease subunit beta (107 aa).

The protein belongs to the urease beta subunit family. In terms of assembly, heterotrimer of UreA (gamma), UreB (beta) and UreC (alpha) subunits. Three heterotrimers associate to form the active enzyme.

Its subcellular location is the cytoplasm. The enzyme catalyses urea + 2 H2O + H(+) = hydrogencarbonate + 2 NH4(+). The protein operates within nitrogen metabolism; urea degradation; CO(2) and NH(3) from urea (urease route): step 1/1. The polypeptide is Urease subunit beta (Teredinibacter turnerae (strain ATCC 39867 / T7901)).